Reading from the N-terminus, the 345-residue chain is Ananain (345 aa).

An N-terminal signal peptide occupies residues 1–24 (MTSKVQLVFLFLFLCVMWASPSAA). The propeptide at 25 to 122 (SCDEPSDPMM…VSFDDVDISS (98 aa)) is activation peptide. 3 cysteine pairs are disulfide-bonded: cysteine 144–cysteine 184, cysteine 178–cysteine 217, and cysteine 273–cysteine 325. Residue cysteine 147 is part of the active site. Cysteine 147 provides a ligand contact to E64. Catalysis depends on residues histidine 279 and asparagine 300.

In terms of tissue distribution, stem (at protein level).

It carries out the reaction Hydrolysis of proteins with broad specificity for peptide bonds. Best reported small molecule substrate Bz-Phe-Val-Arg-|-NHMec, but broader specificity than fruit bromelain.. Strongly inhibited by chicken egg-white cystatin. Inhibited by iodoacetamide and the active-site-directed inhibitor E64 (L-trans-epoxysuccinyl-leucylamide-(4-guanido)-butane). In terms of biological role, cysteine protease. Displays a high level of diversity in substrate specificity at the P1-P1' cleavage site. A hydrophilic P1 residue is preferred, with Gln or Arg strongly preferred. Favors an Ile/Leu residue at the P2 position of substrates, with an overall higher preference for Leu. The optimal tripeptide for cleavage is Pro-Leu-Gln, with cleavage occurring after the Gln residue. Another optimal tripeptide is Val-Leu-Arg, which may imply that a hydrophobic residue at the P3 position of substrates is preferred. This is Ananain from Ananas comosus (Pineapple).